The sequence spans 177 residues: NADH-quinone oxidoreductase subunit B (177 aa).

Cysteine 56, cysteine 57, cysteine 121, and cysteine 151 together coordinate [4Fe-4S] cluster.

Belongs to the complex I 20 kDa subunit family. In terms of assembly, NDH-1 is composed of 14 different subunits. Subunits NuoB, C, D, E, F, and G constitute the peripheral sector of the complex. It depends on [4Fe-4S] cluster as a cofactor.

It localises to the cell inner membrane. It carries out the reaction a quinone + NADH + 5 H(+)(in) = a quinol + NAD(+) + 4 H(+)(out). In terms of biological role, NDH-1 shuttles electrons from NADH, via FMN and iron-sulfur (Fe-S) centers, to quinones in the respiratory chain. The immediate electron acceptor for the enzyme in this species is believed to be ubiquinone. Couples the redox reaction to proton translocation (for every two electrons transferred, four hydrogen ions are translocated across the cytoplasmic membrane), and thus conserves the redox energy in a proton gradient. The chain is NADH-quinone oxidoreductase subunit B from Rhodobacter capsulatus (Rhodopseudomonas capsulata).